Here is a 404-residue protein sequence, read N- to C-terminus: Cysteine desulfurase IscS (404 aa).

Residues 75–76 (AT), Asn155, Gln183, and 203–205 (SAH) each bind pyridoxal 5'-phosphate. Residue Lys206 is modified to N6-(pyridoxal phosphate)lysine. A pyridoxal 5'-phosphate-binding site is contributed by Thr243. The active-site Cysteine persulfide intermediate is Cys328. Cys328 contributes to the [2Fe-2S] cluster binding site.

This sequence belongs to the class-V pyridoxal-phosphate-dependent aminotransferase family. NifS/IscS subfamily. Homodimer. Forms a heterotetramer with IscU, interacts with other sulfur acceptors. Requires pyridoxal 5'-phosphate as cofactor.

Its subcellular location is the cytoplasm. The catalysed reaction is (sulfur carrier)-H + L-cysteine = (sulfur carrier)-SH + L-alanine. It participates in cofactor biosynthesis; iron-sulfur cluster biosynthesis. Its function is as follows. Master enzyme that delivers sulfur to a number of partners involved in Fe-S cluster assembly, tRNA modification or cofactor biosynthesis. Catalyzes the removal of elemental sulfur atoms from cysteine to produce alanine. Functions as a sulfur delivery protein for Fe-S cluster synthesis onto IscU, an Fe-S scaffold assembly protein, as well as other S acceptor proteins. The protein is Cysteine desulfurase IscS of Pseudomonas syringae pv. tomato (strain ATCC BAA-871 / DC3000).